The following is a 287-amino-acid chain: D-alanine--D-alanine ligase (287 aa).

Residues K98–E283 form the ATP-grasp domain. Residue P124–T169 participates in ATP binding. The Mg(2+) site is built by D238, E250, and N252.

It belongs to the D-alanine--D-alanine ligase family. The cofactor is Mg(2+). Mn(2+) serves as cofactor.

It is found in the cytoplasm. It carries out the reaction 2 D-alanine + ATP = D-alanyl-D-alanine + ADP + phosphate + H(+). It functions in the pathway cell wall biogenesis; peptidoglycan biosynthesis. In terms of biological role, cell wall formation. The sequence is that of D-alanine--D-alanine ligase from Fusobacterium nucleatum subsp. nucleatum (strain ATCC 25586 / DSM 15643 / BCRC 10681 / CIP 101130 / JCM 8532 / KCTC 2640 / LMG 13131 / VPI 4355).